Here is a 493-residue protein sequence, read N- to C-terminus: UDP-N-acetylmuramoylalanine--D-glutamate ligase (493 aa).

Glycine 126–threonine 132 is a binding site for ATP.

This sequence belongs to the MurCDEF family.

It is found in the cytoplasm. It catalyses the reaction UDP-N-acetyl-alpha-D-muramoyl-L-alanine + D-glutamate + ATP = UDP-N-acetyl-alpha-D-muramoyl-L-alanyl-D-glutamate + ADP + phosphate + H(+). Its pathway is cell wall biogenesis; peptidoglycan biosynthesis. Cell wall formation. Catalyzes the addition of glutamate to the nucleotide precursor UDP-N-acetylmuramoyl-L-alanine (UMA). The chain is UDP-N-acetylmuramoylalanine--D-glutamate ligase from Mycolicibacterium smegmatis (strain ATCC 700084 / mc(2)155) (Mycobacterium smegmatis).